The primary structure comprises 383 residues: Acetylornithine deacetylase (383 aa).

Residue histidine 80 coordinates Zn(2+). Aspartate 82 is an active-site residue. Aspartate 112 contributes to the Zn(2+) binding site. Glutamate 144 is a catalytic residue. Zn(2+) is bound by residues glutamate 145, glutamate 169, and histidine 355.

The protein belongs to the peptidase M20A family. ArgE subfamily. Homodimer. It depends on Zn(2+) as a cofactor. Requires Co(2+) as cofactor. Glutathione is required as a cofactor.

Its subcellular location is the cytoplasm. The catalysed reaction is N(2)-acetyl-L-ornithine + H2O = L-ornithine + acetate. It functions in the pathway amino-acid biosynthesis; L-arginine biosynthesis; L-ornithine from N(2)-acetyl-L-ornithine (linear): step 1/1. Functionally, catalyzes the hydrolysis of the amide bond of N(2)-acetylated L-amino acids. Cleaves the acetyl group from N-acetyl-L-ornithine to form L-ornithine, an intermediate in L-arginine biosynthesis pathway, and a branchpoint in the synthesis of polyamines. This is Acetylornithine deacetylase from Edwardsiella ictaluri (strain 93-146).